Here is a 465-residue protein sequence, read N- to C-terminus: MSIQQKLWGGRFEEATDAFVEAFTASVDFDKRLASHDIRGSIAHATMLERLGLLTREELQAIVSGLEAIGAEIEAGQFPWEVSLEDVHMNIEARLTQRIGEAGKKLHTGRSRNDQVATDVRLYLRTEIDRICGMILRLQTALVDLAEREAATIMPGFTHLQVAQPVTFGHHMMAWYEMLSRDYDRLRDCRKRVNVMPLGAAALAGSSFPLDRDYTAALLDFSGPAANSLDAVSDRDFAIEFAACASLVLMHLSRFSEELILWTSAQFGFIDLPDAFCTGSSIMPQKKNPDVPELIRGKSARVFGHLFALLTLMKSQPLAYNKDNQEDKEPLFDTVDTLSGCLRAFADMMPHVRPNRSAMYASARKGYATATDLADYLVRRGTPFRDAHEIVGKAVRLGMESSRDLADIPLEELRSLSSVIGPDVYQVLTLEGSVAARSHPGGTAPDCVKRAVAAARVRLAALQGS.

Belongs to the lyase 1 family. Argininosuccinate lyase subfamily.

Its subcellular location is the cytoplasm. The catalysed reaction is 2-(N(omega)-L-arginino)succinate = fumarate + L-arginine. Its pathway is amino-acid biosynthesis; L-arginine biosynthesis; L-arginine from L-ornithine and carbamoyl phosphate: step 3/3. The polypeptide is Argininosuccinate lyase (Methylococcus capsulatus (strain ATCC 33009 / NCIMB 11132 / Bath)).